A 515-amino-acid polypeptide reads, in one-letter code: Cytochrome P450 705A22 (515 aa).

A helical membrane pass occupies residues 9-29 (FQNCFIFILIFLLTFLCFFFF). Cysteine 454 provides a ligand contact to heme.

It belongs to the cytochrome P450 family. Heme serves as cofactor.

It localises to the membrane. In terms of biological role, plays a role in the gravitropic response of the inflorescence stems and roots. May affect the synthesis of flavonols that have a role in regulating auxin transport. This is Cytochrome P450 705A22 from Arabidopsis thaliana (Mouse-ear cress).